A 443-amino-acid chain; its full sequence is UDP-N-acetylmuramate--L-alanine ligase (443 aa).

Position 111–117 (111–117 (GAHGKTS)) interacts with ATP.

It belongs to the MurCDEF family.

The protein resides in the cytoplasm. The catalysed reaction is UDP-N-acetyl-alpha-D-muramate + L-alanine + ATP = UDP-N-acetyl-alpha-D-muramoyl-L-alanine + ADP + phosphate + H(+). It participates in cell wall biogenesis; peptidoglycan biosynthesis. Cell wall formation. The chain is UDP-N-acetylmuramate--L-alanine ligase from Ligilactobacillus salivarius (strain UCC118) (Lactobacillus salivarius).